A 271-amino-acid chain; its full sequence is Aminoglycoside N(3)-acetyltransferase III (271 aa).

CoA-binding residues include histidine 31, alanine 32, serine 33, valine 34, and lysine 35. A 2-deoxystreptamine antibiotic-binding residues include tyrosine 64, aspartate 72, and glutamate 102. The CoA site is built by serine 104, valine 105, and phenylalanine 109. A 2-deoxystreptamine antibiotic contacts are provided by glutamate 123, tyrosine 146, and aspartate 170. CoA-binding residues include threonine 171 and threonine 173. Positions 176, 212, 213, and 221 each coordinate a 2-deoxystreptamine antibiotic.

It belongs to the antibiotic N-acetyltransferase family. Homodimer.

The catalysed reaction is a 2-deoxystreptamine antibiotic + acetyl-CoA = an N(3)-acetyl-2-deoxystreptamine antibiotic + CoA + H(+). In terms of biological role, resistance to antibiotics containing the 2-deoxy-streptamine ring including dibekacin, gentamicin, kanamycin, sisomicin, tobramycin and neomycin, but not to amikacin or netilmicin. Acetylates a broad range of both 4,5- and 4,6-disubstituted aminoglycosides, including neomycin, paromomycin, ribostamycin, sisomicin, gentamicin, tobramycin and kanamycin, with no preference of one disubstitution over the other. Acetylates sisomicin and kanamycin most and least efficiently, respectively. Does not modify plazomicin. The chain is Aminoglycoside N(3)-acetyltransferase III from Pseudomonas aeruginosa.